The primary structure comprises 123 residues: Large ribosomal subunit protein bL20 (123 aa).

Residues 1–15 (MARVKRSVNAKKKRR) are compositionally biased toward basic residues. Residues 1–23 (MARVKRSVNAKKKRREVLDQASG) form a disordered region.

It belongs to the bacterial ribosomal protein bL20 family.

Functionally, binds directly to 23S ribosomal RNA and is necessary for the in vitro assembly process of the 50S ribosomal subunit. It is not involved in the protein synthesizing functions of that subunit. The sequence is that of Large ribosomal subunit protein bL20 from Cutibacterium acnes (strain DSM 16379 / KPA171202) (Propionibacterium acnes).